A 192-amino-acid chain; its full sequence is Bifunctional protein PyrR (192 aa).

The PRPP-binding motif lies at 107-119 (VVLVDDVLFSGRT).

The protein belongs to the purine/pyrimidine phosphoribosyltransferase family. PyrR subfamily.

It catalyses the reaction UMP + diphosphate = 5-phospho-alpha-D-ribose 1-diphosphate + uracil. Its function is as follows. Regulates the transcription of the pyrimidine nucleotide (pyr) operon in response to exogenous pyrimidines. Also displays a weak uracil phosphoribosyltransferase activity which is not physiologically significant. The protein is Bifunctional protein PyrR of Corynebacterium efficiens (strain DSM 44549 / YS-314 / AJ 12310 / JCM 11189 / NBRC 100395).